The primary structure comprises 401 residues: Phosphoglycerate kinase (401 aa).

Residues 23–25, R38, 61–64, R120, and R153 each bind substrate; these read DLN and HFGR. Residues K203, E325, and 355-358 contribute to the ATP site; that span reads GGDT.

Belongs to the phosphoglycerate kinase family. As to quaternary structure, monomer.

The protein resides in the cytoplasm. The catalysed reaction is (2R)-3-phosphoglycerate + ATP = (2R)-3-phospho-glyceroyl phosphate + ADP. It functions in the pathway carbohydrate degradation; glycolysis; pyruvate from D-glyceraldehyde 3-phosphate: step 2/5. In Rhizobium johnstonii (strain DSM 114642 / LMG 32736 / 3841) (Rhizobium leguminosarum bv. viciae), this protein is Phosphoglycerate kinase.